The sequence spans 342 residues: Polygalacturonase inhibitor 1 (342 aa).

The N-terminal stretch at M1–S29 is a signal peptide. 2 cysteine pairs are disulfide-bonded: C32/C62 and C63/C72. N64 carries N-linked (GlcNAc...) asparagine glycosylation. 10 LRR repeats span residues N82–L107, N108–L132, H133–L156, V157–L180, G181–F205, T206–L228, A229–T252, K253–L275, N276–L299, and Q300–L319. Residue N141 is glycosylated (N-linked (GlcNAc...) asparagine). N303 is a glycosylation site (N-linked (GlcNAc...) asparagine). 2 disulfides stabilise this stretch: C310-C332 and C334-C341.

It belongs to the polygalacturonase-inhibiting protein family.

The protein localises to the secreted. Its subcellular location is the cell wall. It localises to the membrane. Functionally, inhibitor of fungal polygalacturonase. It is an important factor for plant resistance to phytopathogenic fungi. Substrate preference is polygalacturonase (PG) from A.niger &gt;&gt; PG of F.oxysporum, A.solani or B.cinerea. Not active on PG from F.moniliforme. The polypeptide is Polygalacturonase inhibitor 1 (PGIP1) (Phaseolus vulgaris (Kidney bean)).